A 159-amino-acid chain; its full sequence is Deoxyuridine 5'-triphosphate nucleotidohydrolase (159 aa).

Positions 79, 92, 95, 98, 103, 148, 153, and 154 each coordinate dUMP.

The protein belongs to the dUTPase family. In terms of assembly, homotrimer. It depends on Mg(2+) as a cofactor.

The catalysed reaction is dUTP + H2O = dUMP + diphosphate + H(+). It participates in pyrimidine metabolism; dUMP biosynthesis; dUMP from dCTP (dUTP route): step 2/2. In terms of biological role, involved in nucleotide metabolism via production of dUMP, the immediate precursor of thymidine nucleotides, and decreases the intracellular concentration of dUTP so that uracil cannot be incorporated into DNA. This chain is Deoxyuridine 5'-triphosphate nucleotidohydrolase (DUT1), found in Candida albicans (strain SC5314 / ATCC MYA-2876) (Yeast).